We begin with the raw amino-acid sequence, 127 residues long: Fumarate reductase subunit C (127 aa).

3 consecutive transmembrane segments (helical) span residues 30–50 (ATVLPLILFTLFLTFGLGSLV), 58–78 (GWLSFMANPIVVGINIVALLG), and 107–127 (IIVLTQWAAVAFISLIVLMVV).

This sequence belongs to the FrdC family. In terms of assembly, part of an enzyme complex containing four subunits: a flavoprotein (FrdA), an iron-sulfur protein (FrdB), and two hydrophobic anchor proteins (FrdC and FrdD).

It localises to the cell inner membrane. Functionally, anchors the catalytic components of the fumarate reductase complex to the cell membrane, binds quinones. In Vibrio atlanticus (strain LGP32) (Vibrio splendidus (strain Mel32)), this protein is Fumarate reductase subunit C.